The chain runs to 398 residues: Lipase member N (398 aa).

The signal sequence occupies residues 1-18 (MMWLLLTTTCLICGTLNA). An AB hydrolase-1 domain is found at 79-379 (PVVYMQHALF…DWNHFDFVWG (301 aa)). The Nucleophile role is filled by serine 173. Cysteine 247 and cysteine 256 are joined by a disulfide. A glycan (N-linked (GlcNAc...) asparagine) is linked at asparagine 272. Active-site charge relay system residues include aspartate 344 and histidine 373.

The protein belongs to the AB hydrolase superfamily. Lipase family. In terms of tissue distribution, highly expressed in the epidermis in the granular keratinocytes. Also detected in other tissues, although at much lower levels, including lung and spleen.

Its subcellular location is the secreted. It carries out the reaction a sterol ester + H2O = a sterol + a fatty acid + H(+). It catalyses the reaction a triacylglycerol + H2O = a 1,2-diacylglycerol + a fatty acid + H(+). The catalysed reaction is a triacylglycerol + H2O = a diacylglycerol + a fatty acid + H(+). The enzyme catalyses a cholesterol ester + H2O = cholesterol + a fatty acid + H(+). In terms of biological role, plays a highly specific role in the last step of keratinocyte differentiation. Contains two distinct domains: the alpha/beta hydrolase fold and the abhydrolase-associated lipase region, also features the consensus sequence of the active site of a genuine lipase. May have an essential function in lipid metabolism of the most differentiated epidermal layers. In Homo sapiens (Human), this protein is Lipase member N (LIPN).